The chain runs to 210 residues: uncharacterized protein (210 aa).

An N-terminal signal peptide occupies residues 1 to 17; it reads MKRTAVSLCLLTGLLSG. Residue cysteine 18 is the site of N-palmitoyl cysteine attachment. The S-diacylglycerol cysteine moiety is linked to residue cysteine 18. Residues 176–195 are compositionally biased toward polar residues; sequence EMKTSPQGSPVSENENANGE. A disordered region spans residues 176–210; it reads EMKTSPQGSPVSENENANGETRQDMKIDRNDKNAR. A compositionally biased stretch (basic and acidic residues) spans 196 to 210; that stretch reads TRQDMKIDRNDKNAR.

It is found in the cell membrane. This is an uncharacterized protein from Bacillus subtilis (strain 168).